The following is a 357-amino-acid chain: Deoxyuridylate hydroxymethyltransferase (357 aa).

It belongs to the thymidylate synthase family.

It catalyses the reaction dUMP + (6R)-5,10-methylene-5,6,7,8-tetrahydrofolate + H2O = 5-hydroxymethyl-dUMP + (6S)-5,6,7,8-tetrahydrofolate. Catalyzes formation of 5-hydroxymethyldeoxyuridylate (5HMdUMP) as a step in the pathway that replaces dTMP by thymidine hypermodifications in the viral genome. As a final result of the pathway of hypermodification, 5-Nalpha-putrescinylthymidine (Nalpha-PutT) substitutes for about 50% of thymidines in the viral DNA. These modifications probably prevent degradation of viral genome by the host restriction-modification antiviral defense system. This Delftia acidovorans (Pseudomonas acidovorans) protein is Deoxyuridylate hydroxymethyltransferase.